Consider the following 326-residue polypeptide: Pyruvate dehydrogenase E1 component subunit beta (326 aa).

Glu60 is a binding site for thiamine diphosphate. Ile113, Ala161, Ile162, and Asn166 together coordinate K(+).

In terms of assembly, heterodimer of an alpha and a beta chain. Thiamine diphosphate serves as cofactor.

The protein localises to the plastid. The protein resides in the chloroplast. It catalyses the reaction N(6)-[(R)-lipoyl]-L-lysyl-[protein] + pyruvate + H(+) = N(6)-[(R)-S(8)-acetyldihydrolipoyl]-L-lysyl-[protein] + CO2. Functionally, the pyruvate dehydrogenase complex catalyzes the overall conversion of pyruvate to acetyl-CoA and CO(2). It contains multiple copies of three enzymatic components: pyruvate dehydrogenase (E1), dihydrolipoamide acetyltransferase (E2) and lipoamide dehydrogenase (E3). This Chaetosphaeridium globosum (Charophycean green alga) protein is Pyruvate dehydrogenase E1 component subunit beta (pdhB).